We begin with the raw amino-acid sequence, 407 residues long: MCDEANPAKPWQLPDVVYGNGIPALCLLHQEIEQFYNYIRSTPTEFCLRAGAVRRIEDVVLSIWPSASVDLFGSFRTGLNLPDSDIDLVVYYKFWNPRLLHELQNELVSQGVTDPDTVTVLDKASVPVVKFTDLISRIRFDVTFNSVASGVQAADLIKDFIRHFPELPKLVMVLKQFLSLHGFNEVYNSGGVSSYALTLMVISFLQQHARSNRRLSEHSKLALLLIQFLDYYGRKFDFFKYGISVLGQGGCVEKARLRSTLGENNWQSVLCIEDPVTPTNDIGRSSYGVLGVMQGFGAAFVKLSKLVDSDSSKIVGPILANIVEVPQSIINYRAWVHYNFQHLLTPELPCADSLVQPSPTGSTSPSASASASEDERSGGPATIGFGRCDDPPQNIDIVADLANLKMN.

The Mg(2+) site is built by D85 and D87. One can recognise a PAP-associated domain in the interval 221-280 (LALLLIQFLDYYGRKFDFFKYGISVLGQGGCVEKARLRSTLGENNWQSVLCIEDPVTPTN). The segment at 354–390 (LVQPSPTGSTSPSASASASEDERSGGPATIGFGRCDD) is disordered. Residues 357-371 (PSPTGSTSPSASASA) show a composition bias toward low complexity.

It belongs to the DNA polymerase type-B-like family.

The chain is Inactive non-canonical poly(A) RNA polymerase protein Trf4-2 from Drosophila melanogaster (Fruit fly).